A 131-amino-acid polypeptide reads, in one-letter code: Leptin receptor overlapping transcript-like 1 (131 aa).

4 consecutive transmembrane segments (helical) span residues 7–27 (LISL…GCAL), 32–52 (QYWP…YCIA), 69–89 (LAIF…VVFA), and 100–120 (ALVL…FLVF).

The protein belongs to the OB-RGRP/VPS55 family. In terms of assembly, interacts with RAB13.

The protein resides in the membrane. In terms of biological role, negatively regulates growth hormone (GH) receptor cell surface expression in liver. May play a role in liver resistance to GH during periods of reduced nutrient availability. The chain is Leptin receptor overlapping transcript-like 1 (Leprotl1) from Rattus norvegicus (Rat).